The chain runs to 237 residues: Ribonuclease PH (237 aa).

Phosphate is bound by residues arginine 86 and 124–126 (GTR).

Belongs to the RNase PH family. As to quaternary structure, homohexameric ring arranged as a trimer of dimers.

It catalyses the reaction tRNA(n+1) + phosphate = tRNA(n) + a ribonucleoside 5'-diphosphate. Functionally, phosphorolytic 3'-5' exoribonuclease that plays an important role in tRNA 3'-end maturation. Removes nucleotide residues following the 3'-CCA terminus of tRNAs; can also add nucleotides to the ends of RNA molecules by using nucleoside diphosphates as substrates, but this may not be physiologically important. Probably plays a role in initiation of 16S rRNA degradation (leading to ribosome degradation) during starvation. This Shewanella sediminis (strain HAW-EB3) protein is Ribonuclease PH.